The chain runs to 394 residues: Probable fatty acyl-CoA transferase Rv3272 (394 aa).

Asp175 (nucleophile) is an active-site residue.

Belongs to the CoA-transferase III family. As to quaternary structure, homodimer.

Functionally, probably involved in fatty acid metabolism. Binds to fatty acyl-CoAs of varying carbon chain lengths, with the highest binding affinity for palmitoyl-CoA (C16:0). In vitro, alters the cell wall lipid profile and protects mycobacteria from acidic, oxidative and antibiotic stress. May play a significant role in host-pathogen interaction. The polypeptide is Probable fatty acyl-CoA transferase Rv3272 (Mycobacterium tuberculosis (strain ATCC 25618 / H37Rv)).